A 250-amino-acid chain; its full sequence is 5-oxoprolinase subunit A (250 aa).

Belongs to the LamB/PxpA family. In terms of assembly, forms a complex composed of PxpA, PxpB and PxpC.

The catalysed reaction is 5-oxo-L-proline + ATP + 2 H2O = L-glutamate + ADP + phosphate + H(+). In terms of biological role, catalyzes the cleavage of 5-oxoproline to form L-glutamate coupled to the hydrolysis of ATP to ADP and inorganic phosphate. The protein is 5-oxoprolinase subunit A of Streptomyces avermitilis (strain ATCC 31267 / DSM 46492 / JCM 5070 / NBRC 14893 / NCIMB 12804 / NRRL 8165 / MA-4680).